Reading from the N-terminus, the 235-residue chain is Uridylate kinase (235 aa).

Position 8 to 11 (8 to 11) interacts with ATP; it reads KFSG. The interval 16–21 is involved in allosteric activation by GTP; it reads GKEGYG. A UMP-binding site is contributed by glycine 50. Residues glycine 51 and arginine 55 each coordinate ATP. UMP is bound by residues aspartate 71 and 132–139; that span reads TGNPYFTT. ATP-binding residues include threonine 159, tyrosine 165, and aspartate 168.

This sequence belongs to the UMP kinase family. As to quaternary structure, homohexamer.

It localises to the cytoplasm. It carries out the reaction UMP + ATP = UDP + ADP. The protein operates within pyrimidine metabolism; CTP biosynthesis via de novo pathway; UDP from UMP (UMPK route): step 1/1. Allosterically activated by GTP. Inhibited by UTP. Functionally, catalyzes the reversible phosphorylation of UMP to UDP. The protein is Uridylate kinase of Sulfurovum sp. (strain NBC37-1).